A 488-amino-acid chain; its full sequence is Bifunctional protein NifU/MnmA (488 aa).

Residues 1 to 130 (MPERYGPRVI…DYWSRQGDAL (130 aa)) form a nifU-like protein region. Positions 143-488 (RRGVVAAMSG…GGGIIARRDA (346 aa)) are tRNA-specific 2-thiouridylase MnmA. ATP is bound by residues 149–156 (AMSGGVDS) and phenylalanine 175. Cysteine 240 acts as the Nucleophile in catalysis. Cysteine 240 and cysteine 333 are oxidised to a cystine. Glycine 264 is a binding site for ATP. Residues 283–285 (KDQ) are interaction with tRNA. Cysteine 333 functions as the Cysteine persulfide intermediate in the catalytic mechanism. Residues 433–434 (RY) form an interaction with tRNA region.

In the N-terminal section; belongs to the NifU family. This sequence in the C-terminal section; belongs to the MnmA/TRMU family.

It is found in the cytoplasm. It carries out the reaction S-sulfanyl-L-cysteinyl-[protein] + uridine(34) in tRNA + AH2 + ATP = 2-thiouridine(34) in tRNA + L-cysteinyl-[protein] + A + AMP + diphosphate + H(+). In terms of biological role, may be involved in the formation or repair of [Fe-S] clusters present in iron-sulfur proteins. Functionally, catalyzes the 2-thiolation of uridine at the wobble position (U34) of tRNA, leading to the formation of s(2)U34. The chain is Bifunctional protein NifU/MnmA (nifU/mnmA) from Rubrobacter xylanophilus (strain DSM 9941 / JCM 11954 / NBRC 16129 / PRD-1).